The chain runs to 214 residues: MGQSLLSSFGDAQQRVEKSLQALRQGEGVLLVDDEDRENEGDLIYSAEHLTAKQMALMIREGSGIVCLCLTGEKVDELKLPQMVTNNNSRHGTGFTISIEARDGVTTGVSAADRTQTVKAAIAEGAVAEDLCQPGHVFPLRARDNGVLDRRGHTEGTVDLMKLSGLAPAGLLCELTNVDGTMARLPEIVDFARKRDMQVLSIEDIAQYRQGHNL.

Residues 37–38 (RE), aspartate 42, 150–154 (RRGHT), and glutamate 174 each bind D-ribulose 5-phosphate. Glutamate 38 serves as a coordination point for Mg(2+). Histidine 153 provides a ligand contact to Mg(2+).

This sequence belongs to the DHBP synthase family. Homodimer. Requires Mg(2+) as cofactor. It depends on Mn(2+) as a cofactor.

It carries out the reaction D-ribulose 5-phosphate = (2S)-2-hydroxy-3-oxobutyl phosphate + formate + H(+). It participates in cofactor biosynthesis; riboflavin biosynthesis; 2-hydroxy-3-oxobutyl phosphate from D-ribulose 5-phosphate: step 1/1. Functionally, catalyzes the conversion of D-ribulose 5-phosphate to formate and 3,4-dihydroxy-2-butanone 4-phosphate. This chain is 3,4-dihydroxy-2-butanone 4-phosphate synthase, found in Desulfotalea psychrophila (strain LSv54 / DSM 12343).